A 304-amino-acid chain; its full sequence is Probable aquaporin NIP5-1 (304 aa).

Transmembrane regions (helical) follow at residues 80 to 100 and 106 to 126; these read LGAE…GPIV and GAET…IIIL. An NPA 1 motif is present at residues 137-139; the sequence is NPS. 3 helical membrane-spanning segments follow: residues 157–177, 195–215, and 219–239; these read AYIA…KGVF, AFAL…AVAT, and AVGE…ILVA. Residues 248-250 carry the NPA 2 motif; it reads NPV. A helical membrane pass occupies residues 266 to 286; the sequence is WVYLVAPTLGAISGAAVYTGV. Serine 301 carries the post-translational modification Phosphoserine.

It belongs to the MIP/aquaporin (TC 1.A.8) family. NIP (TC 1.A.8.12) subfamily. Expressed in rosette leaves.

Its subcellular location is the cell membrane. Boric acid transporter. Low water transport activity. Plays an important role as plasma membrane boric acid channel for the boron uptake required for plant growth and development under boron limitation. In Arabidopsis thaliana (Mouse-ear cress), this protein is Probable aquaporin NIP5-1 (NIP5-1).